Reading from the N-terminus, the 351-residue chain is Phospho-N-acetylmuramoyl-pentapeptide-transferase (351 aa).

10 consecutive transmembrane segments (helical) span residues 17–37, 62–82, 85–105, 130–150, 163–183, 190–210, 230–250, 254–274, 281–301, and 328–348; these read MAYATIFAFLLSLIVGPHIIL, GIPTMGGILIFFCVFISLVFW, ILNVYFLIIVFVMFGFAFLGF, IIFSFISVSILYYLGGEHVSI, LGVFYIPFGMFILIAASNSFN, GLAIGLSIVITGALIIIAYIT, LVIFLGALLGGSFGFLWFNAY, IMMGDTGSLALGAILGMTALI, FSILAGVFIIETMSVIIQVIV, and QVVIRFWIIGLIFAIIALSTI.

The protein belongs to the glycosyltransferase 4 family. MraY subfamily. Mg(2+) serves as cofactor.

The protein resides in the cell inner membrane. It carries out the reaction UDP-N-acetyl-alpha-D-muramoyl-L-alanyl-gamma-D-glutamyl-meso-2,6-diaminopimeloyl-D-alanyl-D-alanine + di-trans,octa-cis-undecaprenyl phosphate = di-trans,octa-cis-undecaprenyl diphospho-N-acetyl-alpha-D-muramoyl-L-alanyl-D-glutamyl-meso-2,6-diaminopimeloyl-D-alanyl-D-alanine + UMP. Its pathway is cell wall biogenesis; peptidoglycan biosynthesis. Catalyzes the initial step of the lipid cycle reactions in the biosynthesis of the cell wall peptidoglycan: transfers peptidoglycan precursor phospho-MurNAc-pentapeptide from UDP-MurNAc-pentapeptide onto the lipid carrier undecaprenyl phosphate, yielding undecaprenyl-pyrophosphoryl-MurNAc-pentapeptide, known as lipid I. This Borreliella afzelii (strain PKo) (Borrelia afzelii) protein is Phospho-N-acetylmuramoyl-pentapeptide-transferase.